The sequence spans 101 residues: MVDFAFELRKAQDTGKIVMGARKSIQYAKMGGAKLIIVARNARPDIKEDIEYYARLSGIPVYEFEGTSVELGTLLGRPHTVSALAVVDPGESRILALGGKE.

Belongs to the eukaryotic ribosomal protein eL30 family.

The sequence is that of Large ribosomal subunit protein eL30 (rpl30e) from Thermococcus celer.